A 239-amino-acid polypeptide reads, in one-letter code: Protein GrpE (239 aa).

2 disordered regions span residues 1–54 (MIEN…ELKN) and 208–239 (SMGPGKQNSQEEVEKDKVEGDIDSEENTSEDV). Residues 19-42 (QDNALENVSSAQELTTENNELSSQ) are compositionally biased toward polar residues. The segment covering 43–53 (KTEEINTEELK) has biased composition (basic and acidic residues). Residues 228 to 239 (DIDSEENTSEDV) are compositionally biased toward acidic residues.

This sequence belongs to the GrpE family. As to quaternary structure, homodimer.

It is found in the cytoplasm. Its function is as follows. Participates actively in the response to hyperosmotic and heat shock by preventing the aggregation of stress-denatured proteins, in association with DnaK and GrpE. It is the nucleotide exchange factor for DnaK and may function as a thermosensor. Unfolded proteins bind initially to DnaJ; upon interaction with the DnaJ-bound protein, DnaK hydrolyzes its bound ATP, resulting in the formation of a stable complex. GrpE releases ADP from DnaK; ATP binding to DnaK triggers the release of the substrate protein, thus completing the reaction cycle. Several rounds of ATP-dependent interactions between DnaJ, DnaK and GrpE are required for fully efficient folding. The sequence is that of Protein GrpE from Prochlorococcus marinus (strain AS9601).